The primary structure comprises 325 residues: Ribonuclease Z (325 aa).

Zn(2+)-binding residues include His63, His65, Asp67, His68, His147, Asp218, and His276. Catalysis depends on Asp67, which acts as the Proton acceptor.

This sequence belongs to the RNase Z family. In terms of assembly, homodimer. The cofactor is Zn(2+).

The enzyme catalyses Endonucleolytic cleavage of RNA, removing extra 3' nucleotides from tRNA precursor, generating 3' termini of tRNAs. A 3'-hydroxy group is left at the tRNA terminus and a 5'-phosphoryl group is left at the trailer molecule.. Functionally, zinc phosphodiesterase, which displays some tRNA 3'-processing endonuclease activity. Probably involved in tRNA maturation, by removing a 3'-trailer from precursor tRNA. This is Ribonuclease Z from Oenococcus oeni (strain ATCC BAA-331 / PSU-1).